A 492-amino-acid chain; its full sequence is MRAFRLASGVLRNRKVILGIGAGSLITAGNIKIRNDSKFDAFFAKGFPDELQHRSLFSVLRSAFVYEICSRAWLVKLSLGAMSLCDVFHLSFLYNPFCRYTFYKHFCGGETPQAVMATMDTLQAAGITSCLNYSREVDLDGDMDVNKIASQGVVPPQVPVPSEKNQKVLRQIADKAFESNMHIIDMATYKPGTVCAVKLTPFINPLVLQRYNSILNQYPVESACNYLEHLKSPELSTYEVSELKKFWEYADKLCQFAKEKQIPLFIDAEQTYFQDCMHAVTVDLMRKYNKEVAIVHNTYQLYLKKSRKIMDDHIKKCVAEGWLMGAKLVRGAYLNSEPRFLIHDTKAETDKDFDSAVEAIIAAAAKFAPGDPASASDPIASRKGKWGIMVASHNKKTMFESVNLAETKKVDFTKTSFYLAQLLGMADDITYALAYSQRNQQPNFCIVKYVSCGPISEVLPYLVRRARENIDALDRCKEERAYYRQALRRRIF.

The protein belongs to the proline oxidase family. Requires FAD as cofactor.

It localises to the mitochondrion. It carries out the reaction L-proline + a quinone = (S)-1-pyrroline-5-carboxylate + a quinol + H(+). Converts proline to delta-1-pyrroline-5-carboxylate. This Schizosaccharomyces pombe (strain 972 / ATCC 24843) (Fission yeast) protein is Probable proline dehydrogenase, mitochondrial.